A 202-amino-acid chain; its full sequence is FMN reductase (NADH) RutF (202 aa).

A compositionally biased stretch (low complexity) spans 168–191 (PRAPRGGSAPAEPARGARAIGARP). The disordered stretch occupies residues 168-202 (PRAPRGGSAPAEPARGARAIGARPPEGPVLALRSA).

Belongs to the non-flavoprotein flavin reductase family. RutF subfamily.

The catalysed reaction is FMNH2 + NAD(+) = FMN + NADH + 2 H(+). Catalyzes the reduction of FMN to FMNH2 which is used to reduce pyrimidine by RutA via the Rut pathway. The protein is FMN reductase (NADH) RutF of Methylorubrum populi (strain ATCC BAA-705 / NCIMB 13946 / BJ001) (Methylobacterium populi).